A 250-amino-acid chain; its full sequence is GTP cyclohydrolase 1 (250 aa).

Basic and acidic residues-rich tracts occupy residues 1–14 (MEKG…EKPR) and 35–44 (PAEKPPRPEA). Residues 1–64 (MEKGPVRAPA…GERPRSEEDN (64 aa)) form a disordered region. Phosphoserine is present on residues serine 60 and serine 81. Residues cysteine 141, histidine 144, and cysteine 212 each coordinate Zn(2+).

It belongs to the GTP cyclohydrolase I family. Toroid-shaped homodecamer, composed of a dimer of pentamers. The inactive isoforms also form decamers and may possibly be incorporated into GCH1 heterodecamers, decreasing enzyme stability and activity. Interacts with AHSA1 and GCHFR/GFRP. Phosphorylated by casein kinase II at Ser-81 in HAECs during oscillatory shear stress; phosphorylation at Ser-81 results in increased enzyme activity. In epidermis, expressed predominantly in basal undifferentiated keratinocytes and in some but not all melanocytes (at protein level).

The protein localises to the cytoplasm. The protein resides in the nucleus. It catalyses the reaction GTP + H2O = 7,8-dihydroneopterin 3'-triphosphate + formate + H(+). It participates in cofactor biosynthesis; 7,8-dihydroneopterin triphosphate biosynthesis; 7,8-dihydroneopterin triphosphate from GTP: step 1/1. GTP shows a positive allosteric effect, and tetrahydrobiopterin inhibits the enzyme activity. Zinc is required for catalytic activity. Inhibited by Mg(2+). Its function is as follows. Positively regulates nitric oxide synthesis in umbilical vein endothelial cells (HUVECs). May be involved in dopamine synthesis. May modify pain sensitivity and persistence. Isoform GCH-1 is the functional enzyme, the potential function of the enzymatically inactive isoforms remains unknown. The polypeptide is GTP cyclohydrolase 1 (GCH1) (Homo sapiens (Human)).